Reading from the N-terminus, the 260-residue chain is Hydroxyethylthiazole kinase 1 (260 aa).

M39 provides a ligand contact to substrate. ATP-binding residues include R115 and T160. G187 contributes to the substrate binding site.

It belongs to the Thz kinase family. Mg(2+) is required as a cofactor.

The enzyme catalyses 5-(2-hydroxyethyl)-4-methylthiazole + ATP = 4-methyl-5-(2-phosphooxyethyl)-thiazole + ADP + H(+). The protein operates within cofactor biosynthesis; thiamine diphosphate biosynthesis; 4-methyl-5-(2-phosphoethyl)-thiazole from 5-(2-hydroxyethyl)-4-methylthiazole: step 1/1. In terms of biological role, catalyzes the phosphorylation of the hydroxyl group of 4-methyl-5-beta-hydroxyethylthiazole (THZ). This chain is Hydroxyethylthiazole kinase 1, found in Streptococcus pneumoniae (strain JJA).